The primary structure comprises 376 residues: RING-H2 finger protein ATL46 (376 aa).

A helical membrane pass occupies residues valine 45–leucine 65. The RING-type; atypical zinc finger occupies cysteine 143–arginine 185. Basic and acidic residues-rich tracts occupy residues arginine 296–glutamate 305 and aspartate 358–arginine 376. 2 disordered regions span residues arginine 296–threonine 320 and phenylalanine 341–arginine 376.

Belongs to the RING-type zinc finger family. ATL subfamily.

The protein localises to the membrane. It catalyses the reaction S-ubiquitinyl-[E2 ubiquitin-conjugating enzyme]-L-cysteine + [acceptor protein]-L-lysine = [E2 ubiquitin-conjugating enzyme]-L-cysteine + N(6)-ubiquitinyl-[acceptor protein]-L-lysine.. It participates in protein modification; protein ubiquitination. In Arabidopsis thaliana (Mouse-ear cress), this protein is RING-H2 finger protein ATL46 (ATL46).